The following is a 147-amino-acid chain: MSMSTSTEVIAHHWAFAIFLIVAIGLCCLMLVGGWFLGGRARARHKNVPFESGIDSVGTARLRLSAKFYLVAMFFVIFDVEALYLFAWSTSIRESGWVGFVEAAIFIFVLLAGLVYLARIGALDWTPARSRRERMNPETNSIANRQR.

3 consecutive transmembrane segments (helical) span residues 16–36 (FAIF…GGWF), 68–88 (FYLV…LFAW), and 97–117 (WVGF…LVYL).

Belongs to the complex I subunit 3 family. NDH-1 is composed of 13 different subunits. Subunits NuoA, H, J, K, L, M, N constitute the membrane sector of the complex.

It localises to the cell inner membrane. It carries out the reaction a quinone + NADH + 5 H(+)(in) = a quinol + NAD(+) + 4 H(+)(out). Its function is as follows. NDH-1 shuttles electrons from NADH, via FMN and iron-sulfur (Fe-S) centers, to quinones in the respiratory chain. The immediate electron acceptor for the enzyme in this species is believed to be ubiquinone. Couples the redox reaction to proton translocation (for every two electrons transferred, four hydrogen ions are translocated across the cytoplasmic membrane), and thus conserves the redox energy in a proton gradient. This chain is NADH-quinone oxidoreductase subunit A, found in Salmonella paratyphi A (strain ATCC 9150 / SARB42).